The chain runs to 744 residues: Cullin-1 (744 aa).

Residues 674–736 form the Cullin neddylation domain; that stretch reads DRRYAIDASI…RDYLERDKDN (63 aa).

It belongs to the cullin family. In terms of assembly, part of a SCF (SKP1-CUL1-F-box protein) E3 ubiquitin-protein ligase complex. Is able to form the SCF complex together with SKP1 and the rice black streaked dwarf virus RBSDV protein P7-2. Interacts with D3. In terms of processing, neddylated (rubylated). Deneddylation occurs upon interaction with the COP9 signalosome (CSN) complex. As to expression, expressed in dry seeds and coleoptiles.

In terms of biological role, involved in ubiquitination and subsequent proteasomal degradation of target proteins. The sequence is that of Cullin-1 from Oryza sativa subsp. japonica (Rice).